The sequence spans 128 residues: Small ribosomal subunit protein uS11 (128 aa).

Belongs to the universal ribosomal protein uS11 family. In terms of assembly, part of the 30S ribosomal subunit. Interacts with proteins S7 and S18. Binds to IF-3.

Its function is as follows. Located on the platform of the 30S subunit, it bridges several disparate RNA helices of the 16S rRNA. Forms part of the Shine-Dalgarno cleft in the 70S ribosome. The polypeptide is Small ribosomal subunit protein uS11 (Acinetobacter baylyi (strain ATCC 33305 / BD413 / ADP1)).